A 256-amino-acid chain; its full sequence is Indole-3-glycerol phosphate synthase (256 aa).

The protein belongs to the TrpC family.

It carries out the reaction 1-(2-carboxyphenylamino)-1-deoxy-D-ribulose 5-phosphate + H(+) = (1S,2R)-1-C-(indol-3-yl)glycerol 3-phosphate + CO2 + H2O. It functions in the pathway amino-acid biosynthesis; L-tryptophan biosynthesis; L-tryptophan from chorismate: step 4/5. The chain is Indole-3-glycerol phosphate synthase from Chlorobaculum tepidum (strain ATCC 49652 / DSM 12025 / NBRC 103806 / TLS) (Chlorobium tepidum).